We begin with the raw amino-acid sequence, 344 residues long: Beta-1,4-galactosyltransferase 4 (344 aa).

At 1–12 (MGCNPPYLLSYR) the chain is on the cytoplasmic side. A helical; Signal-anchor for type II membrane protein transmembrane segment spans residues 13–38 (LRLLLLFTLCLTVLGWATSNYFVGAI). Over 39 to 344 (QVIPRAKNFM…NITVDFWTAA (306 aa)) the chain is Lumenal. Cys-77 and Cys-118 form a disulfide bridge. Residues 129–133 (PHRNR), 168–170 (FNR), and 195–196 (VD) contribute to the UDP-alpha-D-galactose site. Cys-189 and Cys-208 form a disulfide bridge. Asp-196 serves as a coordination point for Mn(2+). Asn-220 carries N-linked (GlcNAc...) asparagine glycosylation. UDP-alpha-D-galactose is bound by residues Tyr-224 and Trp-256. Position 258–261 (258–261 (GEDD)) interacts with N-acetyl-D-glucosamine. Mn(2+) is bound at residue His-289. 289 to 291 (HTR) is a UDP-alpha-D-galactose binding site. Arg-301 contributes to the N-acetyl-D-glucosamine binding site. N-linked (GlcNAc...) asparagine glycosylation is present at Asn-335.

The protein belongs to the glycosyltransferase 7 family. Interacts with SLC35A2/UGT1. Requires Mn(2+) as cofactor.

The protein resides in the golgi apparatus membrane. Its subcellular location is the secreted. It catalyses the reaction N-acetyl-D-glucosamine + UDP-alpha-D-galactose = beta-D-galactosyl-(1-&gt;4)-N-acetyl-D-glucosamine + UDP + H(+). The enzyme catalyses a beta-D-GlcNAc-(1-&gt;3)-beta-D-Gal-(1-&gt;4)-beta-D-Glc-(1&lt;-&gt;1)-Cer(d18:1(4E)) + UDP-alpha-D-galactose = a neolactoside nLc4Cer(d18:1(4E)) + UDP + H(+). It carries out the reaction 3-O-{beta-D-galactosyl-(1-&gt;3)-[6-O-sulfo-N-acetyl-beta-D-glucosaminyl-(1-&gt;6)]-N-acetyl-alpha-D-galactosaminyl}-L-seryl-[protein] + UDP-alpha-D-galactose = 3-O-{beta-D-galactosyl-(1-&gt;3)-[beta-D-galactosyl-(1-&gt;4)-6-O-sulfo-N-acetyl-beta-D-glucosaminyl-(1-&gt;6)]-N-acetyl-alpha-D-galactosaminyl}-L-seryl-[protein] + UDP + H(+). The catalysed reaction is 3-O-{beta-D-galactosyl-(1-&gt;3)-[6-O-sulfo-N-acetyl-beta-D-glucosaminyl-(1-&gt;6)]-N-acetyl-alpha-D-galactosaminyl}-L-threonyl-[protein] + UDP-alpha-D-galactose = 3-O-{beta-D-galactosyl-(1-&gt;3)-[beta-D-galactosyl-(1-&gt;4)-6-O-sulfo-N-acetyl-beta-D-glucosaminyl-(1-&gt;6)]-N-acetyl-alpha-D-galactosaminyl}-L-threonyl-[protein] + UDP + H(+). It functions in the pathway protein modification; protein glycosylation. It participates in glycolipid biosynthesis. Its function is as follows. Galactose (Gal) transferase involved in the synthesis of terminal N-acetyllactosamine (LacNac) unit present on glycan chains of glycoproteins and glycosphingolipids. Catalyzes the transfer of Gal residue via a beta1-&gt;4 linkage from UDP-Gal to the non-reducing terminal N-acetyl glucosamine 6-O-sulfate (6-O-sulfoGlcNAc) in the linearly growing chain of both N- and O-linked keratan sulfate proteoglycans. Cooperates with B3GNT7 N-acetyl glucosamine transferase and CHST6 and CHST1 sulfotransferases to construct and elongate mono- and disulfated disaccharide units [-&gt;3Galbeta1-&gt;4(6-sulfoGlcNAcbeta)1-&gt;] and [-&gt;3(6-sulfoGalbeta)1-&gt;4(6-sulfoGlcNAcbeta)1-&gt;] within keratan sulfate polymer. Transfers Gal residue via a beta1-&gt;4 linkage to terminal 6-O-sulfoGlcNAc within the LacNac unit of core 2 O-glycans forming 6-sulfo-sialyl-Lewis X (sLex). May contribute to the generation of sLex epitope on mucin-type glycoproteins that serve as ligands for SELL/L-selectin, a major regulator of leukocyte migration. In the biosynthesis pathway of neolacto-series glycosphingolipids, transfers Gal residue via a beta1-&gt;4 linkage to terminal GlcNAc of a lactotriaosylceramide (Lc3Cer) acceptor to form a neolactotetraosylceramide. This chain is Beta-1,4-galactosyltransferase 4 (B4galt4), found in Rattus norvegicus (Rat).